The chain runs to 431 residues: Probable pectate lyase 1 (431 aa).

The first 20 residues, 1 to 20 (MAVLPTWLLAMMCLLFFVGA), serve as a signal peptide directing secretion. 3 N-linked (GlcNAc...) asparagine glycosylation sites follow: asparagine 23, asparagine 28, and asparagine 65. Residues aspartate 227, aspartate 251, and aspartate 255 each coordinate Ca(2+). Arginine 307 is a catalytic residue.

The protein belongs to the polysaccharide lyase 1 family. Ca(2+) serves as cofactor. As to expression, expressed in flowers, but not in leaves.

The catalysed reaction is Eliminative cleavage of (1-&gt;4)-alpha-D-galacturonan to give oligosaccharides with 4-deoxy-alpha-D-galact-4-enuronosyl groups at their non-reducing ends.. The protein operates within glycan metabolism; pectin degradation; 2-dehydro-3-deoxy-D-gluconate from pectin: step 2/5. In Arabidopsis thaliana (Mouse-ear cress), this protein is Probable pectate lyase 1.